The sequence spans 463 residues: L-seryl-tRNA(Sec) selenium transferase (463 aa).

N6-(pyridoxal phosphate)lysine is present on Lys295.

Belongs to the SelA family. As to quaternary structure, homodecamer; pentamer of dimers. Binds only one seryl-tRNA(Sec) per dimer. Pyridoxal 5'-phosphate serves as cofactor.

Its subcellular location is the cytoplasm. It catalyses the reaction L-seryl-tRNA(Sec) + selenophosphate + H(+) = L-selenocysteinyl-tRNA(Sec) + phosphate. It participates in aminoacyl-tRNA biosynthesis; selenocysteinyl-tRNA(Sec) biosynthesis; selenocysteinyl-tRNA(Sec) from L-seryl-tRNA(Sec) (bacterial route): step 1/1. Functionally, converts seryl-tRNA(Sec) to selenocysteinyl-tRNA(Sec) required for selenoprotein biosynthesis. In Escherichia coli (strain K12 / MC4100 / BW2952), this protein is L-seryl-tRNA(Sec) selenium transferase.